A 459-amino-acid polypeptide reads, in one-letter code: Serine protease HTRA3 (459 aa).

The first 23 residues, 1-23 (MQARALLPATLATLATLAVSVLA), serve as a signal peptide directing secretion. One can recognise an IGFBP N-terminal domain in the interval 27–90 (PAAPCPARCD…ECVRGVCRCR (64 aa)). Intrachain disulfides connect C31–C54, C35–C56, C40–C57, C45–C60, C68–C82, C76–C87, C89–C107, and C96–C132. Residues 76–134 (CGDSLECVRGVCRCRWTHTVCGTDGHTYADVCALQAASRRALQISGTPVRQLQKGACPS) enclose the Kazal-like domain. The interval 181 to 346 (GSGFIMSEAG…AIPSDRITRF (166 aa)) is serine protease. Residues H197, D233, and S311 each act as charge relay system in the active site. In terms of domain architecture, PDZ spans 365 to 450 (IRMRTITPSL…EVRRGNDDLL (86 aa)).

It belongs to the peptidase S1C family. In terms of assembly, homotrimer. Interacts with TGFB1; the interaction inhibits TGFB-mediated signaling. Interacts with BMP4; the interaction inhibits BMP4-mediated signaling. Interacts with TGFB2, GDF5 and MYH9. Expressed in the ovary, essentially in granulosa cells in a follicle-stage specific manner. Highest levels found in large luteinizing granulosa cells.

It localises to the secreted. Functionally, serine protease that cleaves beta-casein/CSN2 as well as several extracellular matrix (ECM) proteoglycans such as decorin/DCN, biglycan/BGN and fibronectin/FN1. Inhibits signaling mediated by TGF-beta family proteins possibly indirectly by degradation of these ECM proteoglycans. May act as a tumor suppressor. Negatively regulates, in vitro, trophoblast invasion during placental development and may be involved in the development of the placenta in vivo. May also have a role in ovarian development, granulosa cell differentiation and luteinization. The sequence is that of Serine protease HTRA3 (Htra3) from Rattus norvegicus (Rat).